The chain runs to 258 residues: Pyridoxal phosphate homeostasis protein (258 aa).

Lysine 47 carries the post-translational modification N6-(pyridoxal phosphate)lysine.

This sequence belongs to the pyridoxal phosphate-binding protein YggS/PROSC family.

Its function is as follows. Pyridoxal 5'-phosphate (PLP)-binding protein, which is involved in PLP homeostasis. In Mycobacterium bovis (strain ATCC BAA-935 / AF2122/97), this protein is Pyridoxal phosphate homeostasis protein.